The primary structure comprises 391 residues: Chaperone protein DnaJ (391 aa).

A J domain is found at 4–68 (DFYDVLGVSR…ETRQQYDQLG (65 aa)). Residues 53-79 (DVLTDEETRQQYDQLGHERFEEAEKRG) show a composition bias toward basic and acidic residues. Disordered regions lie at residues 53–94 (DVLT…MGGA) and 117–136 (FFGG…EQGR). Gly residues-rich tracts occupy residues 81–94 (TGNG…MGGA) and 119–129 (GGAGGGGGRGR). The CR-type zinc-finger motif lies at 152–234 (GVSKQVTVRR…CGGQGQTRER (83 aa)). Positions 165, 168, 182, 185, 208, 211, 222, and 225 each coordinate Zn(2+). CXXCXGXG motif repeat units follow at residues 165–172 (CADCGGSG), 182–189 (CPQCDGQG), 208–215 (CSRCGGEG), and 222–229 (CSTCGGQG).

The protein belongs to the DnaJ family. Homodimer. Zn(2+) serves as cofactor.

It is found in the cytoplasm. Participates actively in the response to hyperosmotic and heat shock by preventing the aggregation of stress-denatured proteins and by disaggregating proteins, also in an autonomous, DnaK-independent fashion. Unfolded proteins bind initially to DnaJ; upon interaction with the DnaJ-bound protein, DnaK hydrolyzes its bound ATP, resulting in the formation of a stable complex. GrpE releases ADP from DnaK; ATP binding to DnaK triggers the release of the substrate protein, thus completing the reaction cycle. Several rounds of ATP-dependent interactions between DnaJ, DnaK and GrpE are required for fully efficient folding. Also involved, together with DnaK and GrpE, in the DNA replication of plasmids through activation of initiation proteins. The polypeptide is Chaperone protein DnaJ (Halobacterium salinarum (strain ATCC 29341 / DSM 671 / R1)).